A 122-amino-acid polypeptide reads, in one-letter code: Small ribosomal subunit protein uS13 (122 aa).

The interval glycine 95–lysine 122 is disordered.

The protein belongs to the universal ribosomal protein uS13 family. Part of the 30S ribosomal subunit. Forms a loose heterodimer with protein S19. Forms two bridges to the 50S subunit in the 70S ribosome.

Located at the top of the head of the 30S subunit, it contacts several helices of the 16S rRNA. In the 70S ribosome it contacts the 23S rRNA (bridge B1a) and protein L5 of the 50S subunit (bridge B1b), connecting the 2 subunits; these bridges are implicated in subunit movement. Contacts the tRNAs in the A and P-sites. The protein is Small ribosomal subunit protein uS13 of Xanthobacter autotrophicus (strain ATCC BAA-1158 / Py2).